A 198-amino-acid chain; its full sequence is MADTQCCPPPCEFISSAGTDLALGMGWDATLCLLPFTGFGKCAGIWNHMDEEPDNGDDRGSRRTTGQGRKWAAHGTMAAPRVHTDYHPGGGSACSSVKVRSHVGHTGVFFFVDQDPLAVSLTSQSLIPPLIKPGLLKAWGFLLLCAQPSANGHSLCCLLYTDLVSSHELSPFRALCLGPSDAPSACASCNCLASTYYL.

Residues 51–74 are disordered; the sequence is EEPDNGDDRGSRRTTGQGRKWAAH.

This is an uncharacterized protein from Homo sapiens (Human).